We begin with the raw amino-acid sequence, 651 residues long: Probable potassium transport system protein Kup (651 aa).

Positions 1–16 (MRDSPGSKSSSERWHD) are enriched in basic and acidic residues. The interval 1–31 (MRDSPGSKSSSERWHDTMAVSDPTAEGKDES) is disordered. The next 12 helical transmembrane spans lie at 38–58 (FWAL…TSPL), 74–94 (VTPA…FIVV), 129–149 (LLLL…SMIT), 168–188 (LQDY…AVQS), 197–217 (AFAP…VLHI), 232–252 (AIHF…LVFL), 276–296 (WFCL…ALIL), 309–329 (LAPA…TVIA), 366–386 (IYLP…VLLF), 396–416 (YGIA…VVVW), 423–443 (PAAA…FFSA), and 448–468 (LFDG…LIWT).

The protein belongs to the HAK/KUP transporter (TC 2.A.72) family.

It is found in the cell inner membrane. The enzyme catalyses K(+)(in) + H(+)(in) = K(+)(out) + H(+)(out). Its function is as follows. Transport of potassium into the cell. Likely operates as a K(+):H(+) symporter. The protein is Probable potassium transport system protein Kup of Nitrobacter winogradskyi (strain ATCC 25391 / DSM 10237 / CIP 104748 / NCIMB 11846 / Nb-255).